Here is a 322-residue protein sequence, read N- to C-terminus: 3-alpha-hydroxysteroid dehydrogenase (322 aa).

M1 is subject to Blocked amino end (Met). Residues 20-24 (GFGTT) and D50 contribute to the NADP(+) site. The Proton donor role is filled by Y55. Position 117 (H117) interacts with substrate. NADP(+) contacts are provided by residues 166–167 (SN), Q190, and 216–221 (YCTLGS). Residue W227 coordinates substrate. 270-280 (RSFNAKRIKEL) contacts NADP(+).

Belongs to the aldo/keto reductase family. In terms of assembly, monomer. In brain, highest levels found in olfactory bulb. Moderate levels present in cerebellum, cerebral cortex, hypothalamus and pituitary. Low levels present in amygdala, brain stem, caudate putamen, cingulate cortex, hippocampus, midbrain, and thalamus.

Its subcellular location is the cytoplasm. It catalyses the reaction a 3alpha-hydroxysteroid + NADP(+) = a 3-oxosteroid + NADPH + H(+). It carries out the reaction a 3alpha-hydroxysteroid + NAD(+) = a 3-oxosteroid + NADH + H(+). With respect to regulation, potently inhibited by the nonsteroidal anti-inflammatory drugs (NSAID). Functionally, besides being a 3-alpha-hydroxysteroid dehydrogenase, the enzyme can accomplish diverse functions: as quinone reductase, as an aromatic alcohol dehydrogenase, as dihydrodiol dehydrogenase, and as 9-, 11-, and 15-hydroxyprostaglandin dehydrogenase. The sequence is that of 3-alpha-hydroxysteroid dehydrogenase (Akr1c9) from Rattus norvegicus (Rat).